A 173-amino-acid polypeptide reads, in one-letter code: uncharacterized protein (173 aa).

A run of 3 helical transmembrane segments spans residues 24–44, 82–102, and 135–155; these read VAFIAIPISQFCFFNLLWLFF, YILFNILIFATNILVICSYFI, and LIKRFLAYITFPIGIFFILFS.

It is found in the cell membrane. This is an uncharacterized protein from Rickettsia prowazekii (strain Madrid E).